A 444-amino-acid chain; its full sequence is U4/U6 snRNA-associated-splicing factor PRP24 (444 aa).

The segment covering 1-16 (MEYGHHARPDSKRPLD) has biased composition (basic and acidic residues). The interval 1 to 29 (MEYGHHARPDSKRPLDEGSPAAAGLTSKK) is disordered. Position 19 is a phosphoserine (Ser19). 3 RRM domains span residues 41–116 (TTVL…HLTE), 117–195 (CTLW…VSNP), and 210–289 (REIM…LADK).

Monomer. Interacts with U6 snRNA SNR6 and the LSM2-8 complex (small nuclear RNA); to chaperone formation of the U4/U6-U5 tri-snRNP (small nuclear ribonucleoprotein) assembly, the protein is displaced from the U4/U6 snRNP once pairing is complete.

It is found in the nucleus. Its function is as follows. Functions as a recycling factor of the spliceosome, a machinery that forms on each precursor-messenger RNA (pre-mRNA) and catalyzes the removal of introns. Chaperones the re-annealing of U4 and U6 snRNAs (small nuclear RNAs) released from previous rounds of splicing, an initial step in reforming the U4/U6-U5 tri-snRNP (small nuclear ribonucleoprotein) that can reassemble into another spliceosome complex; this step involves binding U6 and facilitating the unwinding of the U6 internal stem loop, followed by base-pairing of U6 to U4. In Saccharomyces cerevisiae (strain ATCC 204508 / S288c) (Baker's yeast), this protein is U4/U6 snRNA-associated-splicing factor PRP24 (PRP24).